Here is a 185-residue protein sequence, read N- to C-terminus: DNA-directed RNA polymerase 22 kDa subunit (185 aa).

It belongs to the poxviridae DNA-directed RNA polymerase 22 kDa subunit family. In terms of assembly, the DNA-dependent RNA polymerase used for intermediate and late genes expression consists of eight subunits Rpo30/OPG66, Rpo7/OPG90, Rpo22/OPG103, Rpo147/OPG105, Rpo18/OPG119, Rpo19/OPG131, Rpo132/OPG151 and Rpo35/OPG156. The same holoenzyme, with the addition of the transcription-specificity factor OPG109, is used for early gene expression.

It is found in the virion. The enzyme catalyses RNA(n) + a ribonucleoside 5'-triphosphate = RNA(n+1) + diphosphate. Functionally, part of the DNA-dependent RNA polymerase which catalyzes the transcription of viral DNA into RNA using the four ribonucleoside triphosphates as substrates. Responsible for the transcription of early, intermediate and late genes. DNA-dependent RNA polymerase associates with the early transcription factor (ETF), itself composed of OPG118 and OPG133, thereby allowing the early genes transcription. Late transcription, and probably also intermediate transcription, require newly synthesized RNA polymerase. This chain is DNA-directed RNA polymerase 22 kDa subunit (OPG103), found in Cynomys gunnisoni (Gunnison's prairie dog).